Reading from the N-terminus, the 219-residue chain is 2-C-methyl-D-erythritol 4-phosphate cytidylyltransferase (219 aa).

This sequence belongs to the IspD/TarI cytidylyltransferase family. IspD subfamily.

It carries out the reaction 2-C-methyl-D-erythritol 4-phosphate + CTP + H(+) = 4-CDP-2-C-methyl-D-erythritol + diphosphate. Its pathway is isoprenoid biosynthesis; isopentenyl diphosphate biosynthesis via DXP pathway; isopentenyl diphosphate from 1-deoxy-D-xylulose 5-phosphate: step 2/6. Functionally, catalyzes the formation of 4-diphosphocytidyl-2-C-methyl-D-erythritol from CTP and 2-C-methyl-D-erythritol 4-phosphate (MEP). This chain is 2-C-methyl-D-erythritol 4-phosphate cytidylyltransferase, found in Phocaeicola vulgatus (strain ATCC 8482 / DSM 1447 / JCM 5826 / CCUG 4940 / NBRC 14291 / NCTC 11154) (Bacteroides vulgatus).